We begin with the raw amino-acid sequence, 597 residues long: MAASSSIVSVAPTASSVPVLPSSCDFSNLREIKKQLLLIAGLTRERGLLHSSKWSAELAFSLPALPLSELQPPPPITEEDAQDMDAYTLAKAYFDVKEYDRAAHFLHGCNSKKAYFLYMYSRYLSGEKKKDDETVDSLGPLEKGQVKNEALRELRVELSKKHQARELDGFGLYLYGVVLRKLDLVKEAIDVFVEATHVLPLHWGAWLELCNLITDKEMLKFLSLPDTWMKEFFLAHIYTELQLIEEALQKYQNLIDVGFSKSSYIVSQIAVAYHNIRDIDKALSIFNELRKQDPYRIENMDTFSNLLYVRSMKSELSYLAHNLCEIDKYRVETCCVIGNYYSLRSQHEKAALYFQRALKLNPRYLGAWTLMGHEYMEMKNTSAAIQAYRHAIEVNKRDYRAWYGLGQTYEILKMPFYCLYYYRRAHQLRPNDSRMLVALGECYEKLNQLVEAKKCYWRAYAVGDVEKMALVKLAKLHEQLTESEQAAQCYIKYIQDIYSCGEIVEHLEESTAFRYLAQYYFKCKLWDEASACAQKCCAFNDTREEGKALLRQILQLRNQGETPSTEIPAPFFLPASLSANNTPTRRVSPLNLSSVTP.

A2 carries the post-translational modification N-acetylalanine. TPR repeat units follow at residues S27–P63, P73–K112, and A114–G144. K147 is covalently cross-linked (Glycyl lysine isopeptide (Lys-Gly) (interchain with G-Cter in SUMO2)). TPR repeat units follow at residues G169 to P200, M229 to F259, S263 to D293, I297 to D327, V331 to N361, G366 to N395, R400 to D432, and S433 to E466. Position 273 is a phosphotyrosine (Y273). At K467 the chain carries N6-acetyllysine. 2 TPR repeats span residues M468–C500 and V504–N540. Phosphothreonine is present on residues T562 and T565. Position 578 is a phosphoserine (S578). Residue T582 is modified to Phosphothreonine. S588 and S593 each carry phosphoserine. A Phosphothreonine modification is found at T596.

It belongs to the APC8/CDC23 family. As to quaternary structure, the mammalian APC/C is composed at least of 14 distinct subunits ANAPC1, ANAPC2, CDC27/APC3, ANAPC4, ANAPC5, CDC16/APC6, ANAPC7, CDC23/APC8, ANAPC10, ANAPC11, CDC26/APC12, ANAPC13, ANAPC15 and ANAPC16 that assemble into a complex of at least 19 chains with a combined molecular mass of around 1.2 MDa; APC/C interacts with FZR1 and FBXO5. Interacts with FBXO43; the interaction is direct. Post-translationally, phosphorylated. Phosphorylation on Thr-562 occurs specifically during mitosis.

It participates in protein modification; protein ubiquitination. Functionally, component of the anaphase promoting complex/cyclosome (APC/C), a cell cycle-regulated E3 ubiquitin ligase that controls progression through mitosis and the G1 phase of the cell cycle. The APC/C complex acts by mediating ubiquitination and subsequent degradation of target proteins: it mainly mediates the formation of 'Lys-11'-linked polyubiquitin chains and, to a lower extent, the formation of 'Lys-48'- and 'Lys-63'-linked polyubiquitin chains. The APC/C complex catalyzes assembly of branched 'Lys-11'-/'Lys-48'-linked branched ubiquitin chains on target proteins. In Bos taurus (Bovine), this protein is Cell division cycle protein 23 homolog (CDC23).